The following is a 266-amino-acid chain: Interleukin-1 beta (266 aa).

Positions 1–113 (MATVPEPINE…ETSSDEFLCD (113 aa)) are excised as a propeptide.

This sequence belongs to the IL-1 family. In terms of assembly, monomer. In its precursor form, weakly interacts with full-length MEFV; the mature cytokine does not interact at all. Interacts with integrins ITGAV:ITGBV and ITGA5:ITGB1; integrin-binding is required for IL1B signaling. Interacts with cargo receptor TMED10; the interaction is direct and is required for the secretion of IL1B mature form. Interacts with HSP90AB1; the interaction facilitates cargo translocation into the ERGIC. Interacts with HSP90B1; the interaction facilitates cargo translocation into the ERGIC.

The protein localises to the cytoplasm. Its subcellular location is the cytosol. It localises to the secreted. The protein resides in the lysosome. It is found in the extracellular exosome. In terms of biological role, potent pro-inflammatory cytokine. Initially discovered as the major endogenous pyrogen, induces prostaglandin synthesis, neutrophil influx and activation, T-cell activation and cytokine production, B-cell activation and antibody production, and fibroblast proliferation and collagen production. Promotes Th17 differentiation of T-cells. Synergizes with IL12/interleukin-12 to induce IFNG synthesis from T-helper 1 (Th1) cells. Plays a role in angiogenesis by inducing VEGF production synergistically with TNF and IL6. Involved in transduction of inflammation downstream of pyroptosis: its mature form is specifically released in the extracellular milieu by passing through the gasdermin-D (GSDMD) pore. This is Interleukin-1 beta (IL1B) from Bubalus carabanensis (Swamp type water buffalo).